Reading from the N-terminus, the 319-residue chain is L-lactate dehydrogenase (319 aa).

NAD(+) is bound by residues 10–11, Asp32, Arg37, Tyr62, and 76–77; these read RV and GV. Residues Gln79, Arg85, and 117 to 120 each bind substrate; that span reads NPVD. NAD(+) is bound by residues 115–117 and Ser140; that span reads VTN. Residue 145-148 coordinates substrate; that stretch reads DTAR. Residues Arg150 and His165 each contribute to the beta-D-fructose 1,6-bisphosphate site. The Proton acceptor role is filled by His172. Tyr217 bears the Phosphotyrosine mark. Position 226 (Thr226) interacts with substrate.

It belongs to the LDH/MDH superfamily. LDH family. As to quaternary structure, homotetramer.

It localises to the cytoplasm. It carries out the reaction (S)-lactate + NAD(+) = pyruvate + NADH + H(+). It functions in the pathway fermentation; pyruvate fermentation to lactate; (S)-lactate from pyruvate: step 1/1. Allosterically activated by fructose 1,6-bisphosphate (FBP). Inactivated by Mn(2+), Co(2+), Cd(2+) and Zn(2+). Catalyzes the conversion of lactate to pyruvate. It is stereospecific for L(+)-lactate. The polypeptide is L-lactate dehydrogenase (Thermotoga maritima (strain ATCC 43589 / DSM 3109 / JCM 10099 / NBRC 100826 / MSB8)).